The following is a 53-amino-acid chain: Antilisterial bacteriocin subtilosin biosynthesis protein AlbB (53 aa).

2 consecutive transmembrane segments (helical) span residues 8–28 (ILLYILSFIFVIGAVVYFVKS) and 30–50 (YLFTLIFIAIAILFGMRARKA).

It is found in the cell membrane. Its function is as follows. Involved in the production of the bacteriocin subtilosin. Required for maximal production and for optimal immunity to subtilosin. This chain is Antilisterial bacteriocin subtilosin biosynthesis protein AlbB (albB), found in Bacillus subtilis (strain 168).